A 241-amino-acid chain; its full sequence is tRNA pseudouridine synthase A (241 aa).

The Nucleophile role is filled by Asp52. Tyr110 provides a ligand contact to substrate.

Belongs to the tRNA pseudouridine synthase TruA family. As to quaternary structure, homodimer.

The catalysed reaction is uridine(38/39/40) in tRNA = pseudouridine(38/39/40) in tRNA. Functionally, formation of pseudouridine at positions 38, 39 and 40 in the anticodon stem and loop of transfer RNAs. The chain is tRNA pseudouridine synthase A from Aquifex aeolicus (strain VF5).